Reading from the N-terminus, the 258-residue chain is Ureidoacrylate amidohydrolase RutB (258 aa).

The interval 1 to 23 (MDRPTTYPMDQPAGFRDAQGRHG) is disordered. The active-site Proton acceptor is Asp-47. Lys-156 is an active-site residue. Cys-189 acts as the Nucleophile in catalysis.

It belongs to the isochorismatase family. RutB subfamily.

The enzyme catalyses (Z)-3-ureidoacrylate + H2O + H(+) = (Z)-3-aminoacrylate + NH4(+) + CO2. It carries out the reaction (Z)-3-ureidoacrylate + H2O = (Z)-3-aminoacrylate + carbamate + H(+). It catalyses the reaction (Z)-2-methylureidoacrylate + H2O + H(+) = (Z)-2-methylaminoacrylate + NH4(+) + CO2. Its function is as follows. Hydrolyzes ureidoacrylate to form aminoacrylate and carbamate. The carbamate hydrolyzes spontaneously, thereby releasing one of the nitrogen atoms of the pyrimidine ring as ammonia and one of its carbon atoms as CO2. This is Ureidoacrylate amidohydrolase RutB from Methylobacterium radiotolerans (strain ATCC 27329 / DSM 1819 / JCM 2831 / NBRC 15690 / NCIMB 10815 / 0-1).